The primary structure comprises 444 residues: Exodeoxyribonuclease 7 large subunit (444 aa).

It belongs to the XseA family. Heterooligomer composed of large and small subunits.

It is found in the cytoplasm. The enzyme catalyses Exonucleolytic cleavage in either 5'- to 3'- or 3'- to 5'-direction to yield nucleoside 5'-phosphates.. In terms of biological role, bidirectionally degrades single-stranded DNA into large acid-insoluble oligonucleotides, which are then degraded further into small acid-soluble oligonucleotides. In Rickettsia canadensis (strain McKiel), this protein is Exodeoxyribonuclease 7 large subunit.